The chain runs to 753 residues: 5-methyltetrahydropteroyltriglutamate--homocysteine methyltransferase (753 aa).

Residues 17–20 (RELK) and lysine 117 each bind 5-methyltetrahydropteroyltri-L-glutamate. Residues 431–433 (IGS) and glutamate 484 each bind L-homocysteine. L-methionine contacts are provided by residues 431 to 433 (IGS) and glutamate 484. 5-methyltetrahydropteroyltri-L-glutamate-binding positions include 515 to 516 (RC) and tryptophan 561. Position 599 (aspartate 599) interacts with L-homocysteine. Residue aspartate 599 coordinates L-methionine. Glutamate 605 provides a ligand contact to 5-methyltetrahydropteroyltri-L-glutamate. Zn(2+) contacts are provided by histidine 641, cysteine 643, and glutamate 665. The active-site Proton donor is histidine 694. Cysteine 726 contacts Zn(2+).

The protein belongs to the vitamin-B12 independent methionine synthase family. Zn(2+) serves as cofactor.

It carries out the reaction 5-methyltetrahydropteroyltri-L-glutamate + L-homocysteine = tetrahydropteroyltri-L-glutamate + L-methionine. It participates in amino-acid biosynthesis; L-methionine biosynthesis via de novo pathway; L-methionine from L-homocysteine (MetE route): step 1/1. Catalyzes the transfer of a methyl group from 5-methyltetrahydrofolate to homocysteine resulting in methionine formation. This chain is 5-methyltetrahydropteroyltriglutamate--homocysteine methyltransferase, found in Escherichia coli O9:H4 (strain HS).